The following is a 259-amino-acid chain: Putative zinc metalloprotease Rip2 (259 aa).

2 helical membrane-spanning segments follow: residues 14 to 34 (PIFL…WLAG) and 39 to 59 (PLAY…SLCL). Zn(2+) is bound at residue His-60. Glu-61 is an active-site residue. His-64 is a binding site for Zn(2+). The next 4 helical transmembrane spans lie at 97-117 (GLPM…AVYV), 128-148 (TLVS…LLAA), 156-176 (IHAV…TALV), and 211-231 (LVFL…FGVV).

It belongs to the peptidase M50B family. Zn(2+) serves as cofactor.

Its subcellular location is the cell membrane. The chain is Putative zinc metalloprotease Rip2 (rip2) from Mycobacterium tuberculosis (strain ATCC 25618 / H37Rv).